The following is a 268-amino-acid chain: Nickel import ATP-binding protein NikE (268 aa).

The 249-residue stretch at 4–252 (LNVSDLSHHY…SSDAGRVLQN (249 aa)) folds into the ABC transporter domain. 45–52 (GRSGCGKS) is an ATP binding site.

This sequence belongs to the ABC transporter superfamily. Nickel importer (TC 3.A.1.5.3) family. In terms of assembly, the complex is composed of two ATP-binding proteins (NikD and NikE), two transmembrane proteins (NikB and NikC) and a solute-binding protein (NikA).

Its subcellular location is the cell inner membrane. The catalysed reaction is Ni(2+)(out) + ATP + H2O = Ni(2+)(in) + ADP + phosphate + H(+). Functionally, part of the ABC transporter complex NikABCDE involved in nickel import. Responsible for energy coupling to the transport system. This is Nickel import ATP-binding protein NikE from Escherichia coli O157:H7.